The chain runs to 1032 residues: Exportin-T (1032 aa).

Belongs to the exportin family.

The protein localises to the nucleus. It is found in the cytoplasm. TRNA nucleus export receptor which facilitates tRNA translocation across the nuclear pore complex. Involved in pre-tRNA splicing, probably by affecting the interaction of pre-tRNA with splicing endonuclease. The polypeptide is Exportin-T (los1) (Aspergillus fumigatus (strain ATCC MYA-4609 / CBS 101355 / FGSC A1100 / Af293) (Neosartorya fumigata)).